Reading from the N-terminus, the 942-residue chain is Zinc finger protein 865 (942 aa).

The interval 66–106 is disordered; sequence FASTSTSKPKEFKVEAPPSSSLSPSKKPDIATTQQFNNQPP. Polar residues predominate over residues 96–106; it reads ATTQQFNNQPP. 20 consecutive C2H2-type zinc fingers follow at residues 172–194, 200–222, 282–304, 310–332, 338–360, 367–389, 466–488, 494–516, 522–544, 564–586, 592–614, 678–700, 706–728, 734–756, 762–784, 790–812, 818–840, 846–868, 874–896, and 902–924; these read FPCT…MLVH, YECN…RRCH, FTCT…QIIH, FSCS…VKTH, VQCE…QATH, YKCE…KQVH, FCCN…ERIH, HQCS…HVVH, YKCE…KQIH, FGCT…KELH, YVCD…KLVH, FSCS…KYVH, LACN…RRTH, FTCS…QRCH, YRCT…KVVH, YKCA…QRLH, QRCP…QRVH, YRCD…QRSH, LRCS…VQTH, and FKCG…RHAH.

This sequence belongs to the krueppel C2H2-type zinc-finger protein family.

The protein localises to the nucleus. Its function is as follows. May be involved in transcriptional regulation. In Xenopus tropicalis (Western clawed frog), this protein is Zinc finger protein 865 (znf865).